Here is a 201-residue protein sequence, read N- to C-terminus: Small ribosomal subunit protein uS4c (201 aa).

Positions 15-44 are disordered; the sequence is LGALPGLTNKRPRAGSDLRNQSRSGKKSQY. The S4 RNA-binding domain maps to 89–149; it reads MRLDNILFRL…DEQKSRALIQ (61 aa).

This sequence belongs to the universal ribosomal protein uS4 family. As to quaternary structure, part of the 30S ribosomal subunit. Contacts protein S5. The interaction surface between S4 and S5 is involved in control of translational fidelity.

It is found in the plastid. Its subcellular location is the chloroplast. Functionally, one of the primary rRNA binding proteins, it binds directly to 16S rRNA where it nucleates assembly of the body of the 30S subunit. With S5 and S12 plays an important role in translational accuracy. This is Small ribosomal subunit protein uS4c (rps4) from Helianthus annuus (Common sunflower).